We begin with the raw amino-acid sequence, 24 residues long: Chaperonin GroEL (24 aa).

The protein belongs to the chaperonin (HSP60) family. As to quaternary structure, forms a cylinder of 14 subunits composed of two heptameric rings stacked back-to-back. Interacts with the co-chaperonin GroES.

It is found in the cytoplasm. The catalysed reaction is ATP + H2O + a folded polypeptide = ADP + phosphate + an unfolded polypeptide.. Functionally, together with its co-chaperonin GroES, plays an essential role in assisting protein folding. The GroEL-GroES system forms a nano-cage that allows encapsulation of the non-native substrate proteins and provides a physical environment optimized to promote and accelerate protein folding. In Acinetobacter calcoaceticus, this protein is Chaperonin GroEL.